The following is a 673-amino-acid chain: MASPAPPVAEELPGPASRRLYSRMEASCLELALEGERLCKAGDFKAGVAFFEAAVQVGTEDLKTLSAIYSQLGNAYFYLKEYARALQFHKHDLLLARTIGDRMGEAKASGNLGNTLKVLGRFDEAIVCCQRHLDIAQEQGDKVGEARALYNIGNVYHAKGKQLSWNAAQDPGHLPPDVRETLHRASEFYERNLSLVKELGDRAAQGRAYGNLGNTHYLLGNFTEATTFHKERLAIAKEFGDKAAERRAYSNLGNAHIFLGRFDVAAEHYKKTLQLSRQLRDQAVEAQACYSLGNTYTLLQDYERAAEYHLRHLVIAQELADRVGEGRACWSLGNAYVSMGSPAQALTFAKKHLQISQEIGDRNGELTARMNIAHLQLALGRLTSPAAAEKPDLAGYEAQGARPKRTQRLSAETWDLLRLPLDREQNGETHHTGDWRGPGRDSLPLPMRSRKYQEGPDAIERRPREGSHSPLDSADVRVQVPRTGIPRAPSSDEECFFDLLSKFQSSRMDDQRCPLEEGQAGAAEATAAPSVEDRAAQSSVTASPQTEEFFDLIASSQSRRLDDQRASVGSLPGLRITLNNVGHLRGDGDAQEPGDEFFNMLIKYQSSRIDDQRCPPPDVLPRGPTMPDEDFFSLIQRVQAKRMDEQRVDLAGSPEQEASGLPDPQQQCPPGAS.

Residues 1–507 are mediates association with membranes; sequence MASPAPPVAE…DLLSKFQSSR (507 aa). 9 TPR repeats span residues 28–61, 66–99, 106–139, 146–178, 180–199, 206–239, 246–279, 286–319, and 326–359; these read CLEL…GTED, SAIY…ARTI, AKAS…AQEQ, ARAL…PPDV, ETLH…VKEL, GRAY…AKEF, RRAY…SRQL, AQAC…AQEL, and GRAC…SQEI. Residues 361-485 are interaction with STK11/LKB1; that stretch reads DRNGELTARM…VRVQVPRTGI (125 aa). Residue Ser-410 is modified to Phosphoserine. Arg-418 carries the post-translational modification Omega-N-methylarginine. Residues 420–439 are compositionally biased toward basic and acidic residues; the sequence is PLDREQNGETHHTGDWRGPG. Positions 420-475 are disordered; it reads PLDREQNGETHHTGDWRGPGRDSLPLPMRSRKYQEGPDAIERRPREGSHSPLDSAD. Phosphoserine is present on residues Ser-442, Ser-467, Ser-469, Ser-490, and Ser-491. Positions 451–467 are enriched in basic and acidic residues; the sequence is KYQEGPDAIERRPREGS. In terms of domain architecture, GoLoco 1 spans 493-515; it reads EECFFDLLSKFQSSRMDDQRCPL. Positions 508 to 531 are disordered; it reads MDDQRCPLEEGQAGAAEATAAPSV. Over residues 516-528 the composition is skewed to low complexity; that stretch reads EEGQAGAAEATAA. Phosphoserine occurs at positions 543 and 567. GoLoco domains are found at residues 546–568, 594–616, and 628–650; these read TEEF…RASV, GDEF…RCPP, and DEDF…RVDL. The segment at 644 to 673 is disordered; it reads DEQRVDLAGSPEQEASGLPDPQQQCPPGAS. Residue Ser-653 is modified to Phosphoserine. The segment covering 664 to 673 has biased composition (polar residues); that stretch reads PQQQCPPGAS.

Belongs to the GPSM family. As to quaternary structure, interacts with GNAI1 and GNAI2 preferentially in their GDP-bound state. May also interact with GNAO1. Interacts with INSC/inscuteable and FRMPD1. Interacts with GNAI3. Interacts with STK11/LKB1 and MACF1. In terms of processing, phosphorylation regulates interaction with G(i/o) alpha. In terms of tissue distribution, expressed in neural progenitor cells (at protein level).

It is found in the cytoplasm. It localises to the cytosol. The protein resides in the endoplasmic reticulum membrane. The protein localises to the golgi apparatus membrane. Its subcellular location is the cell membrane. Guanine nucleotide dissociation inhibitor (GDI) which functions as a receptor-independent activator of heterotrimeric G-protein signaling. Keeps G(i/o) alpha subunit in its GDP-bound form thus uncoupling heterotrimeric G-proteins signaling from G protein-coupled receptors. Controls spindle orientation and asymmetric cell fate of cerebral cortical progenitors. May also be involved in macroautophagy in intestinal cells. May play a role in drug addiction. The polypeptide is G-protein-signaling modulator 1 (Gpsm1) (Mus musculus (Mouse)).